The sequence spans 468 residues: Glutamate--tRNA ligase (468 aa).

The 'HIGH' region motif lies at 9–19; that stretch reads PSPTGSIHIGN. A 'KMSKS' region motif is present at residues 239-243; it reads KLSKR. Lysine 242 is an ATP binding site.

This sequence belongs to the class-I aminoacyl-tRNA synthetase family. Glutamate--tRNA ligase type 1 subfamily. In terms of assembly, monomer.

It is found in the cytoplasm. The catalysed reaction is tRNA(Glu) + L-glutamate + ATP = L-glutamyl-tRNA(Glu) + AMP + diphosphate. In terms of biological role, catalyzes the attachment of glutamate to tRNA(Glu) in a two-step reaction: glutamate is first activated by ATP to form Glu-AMP and then transferred to the acceptor end of tRNA(Glu). This chain is Glutamate--tRNA ligase, found in Blochmanniella pennsylvanica (strain BPEN).